Here is a 462-residue protein sequence, read N- to C-terminus: Bifunctional enzyme LpxC/FabZ (462 aa).

The segment at 1–302 is UDP-3-O-acyl-N-acetylglucosamine deacetylase; the sequence is MQKQQTLKDK…MARLIRKEIK (302 aa). Zn(2+) contacts are provided by His78, His260, and Asp264. The active-site Proton donor is the His287. The segment at 303 to 462 is 3-hydroxyacyl-[acyl-carrier-protein] dehydratase; the sequence is QNEAQAPVYN…FMAQIIQNKE (160 aa). The active site involves His364.

The protein in the N-terminal section; belongs to the LpxC family. It in the C-terminal section; belongs to the thioester dehydratase family. Zn(2+) is required as a cofactor.

Its subcellular location is the cytoplasm. The catalysed reaction is a UDP-3-O-[(3R)-3-hydroxyacyl]-N-acetyl-alpha-D-glucosamine + H2O = a UDP-3-O-[(3R)-3-hydroxyacyl]-alpha-D-glucosamine + acetate. It catalyses the reaction a (3R)-hydroxyacyl-[ACP] = a (2E)-enoyl-[ACP] + H2O. It functions in the pathway glycolipid biosynthesis; lipid IV(A) biosynthesis; lipid IV(A) from (3R)-3-hydroxytetradecanoyl-[acyl-carrier-protein] and UDP-N-acetyl-alpha-D-glucosamine: step 2/6. Its function is as follows. Catalyzes the hydrolysis of UDP-3-O-myristoyl-N-acetylglucosamine to form UDP-3-O-myristoylglucosamine and acetate, the committed step in lipid A biosynthesis. Functionally, involved in unsaturated fatty acids biosynthesis. Catalyzes the dehydration of short chain beta-hydroxyacyl-ACPs and long chain saturated and unsaturated beta-hydroxyacyl-ACPs. The protein is Bifunctional enzyme LpxC/FabZ (lpxC/fabZ) of Porphyromonas gingivalis (strain ATCC BAA-308 / W83).